The following is a 31-amino-acid chain: Photosystem II reaction center protein M (31 aa).

A helical membrane pass occupies residues 5–25 (ILALMATALFIIIPTAFLIIL).

The protein belongs to the PsbM family. As to quaternary structure, PSII is composed of 1 copy each of membrane proteins PsbA, PsbB, PsbC, PsbD, PsbE, PsbF, PsbH, PsbI, PsbJ, PsbK, PsbL, PsbM, PsbT, PsbX, PsbY, PsbZ, Psb30/Ycf12, at least 3 peripheral proteins of the oxygen-evolving complex and a large number of cofactors. It forms dimeric complexes.

It localises to the plastid. Its subcellular location is the chloroplast thylakoid membrane. In terms of biological role, one of the components of the core complex of photosystem II (PSII). PSII is a light-driven water:plastoquinone oxidoreductase that uses light energy to abstract electrons from H(2)O, generating O(2) and a proton gradient subsequently used for ATP formation. It consists of a core antenna complex that captures photons, and an electron transfer chain that converts photonic excitation into a charge separation. This subunit is found at the monomer-monomer interface. This Mesostigma viride (Green alga) protein is Photosystem II reaction center protein M.